A 483-amino-acid chain; its full sequence is Matrix metalloproteinase-20 (483 aa).

Residues 1 to 22 (MKVLPASGLAVFLIMALKFSTA) form the signal peptide. The propeptide occupies 23 to 107 (APSLVAASPR…PRCGVPDVAN (85 aa)). Residues 98-105 (PRCGVPDV) carry the Cysteine switch motif. Residue Cys100 coordinates Zn(2+). 3 residues coordinate Ca(2+): Glu164, Ala165, and Asp166. Positions 176 and 178 each coordinate Zn(2+). Ca(2+) is bound by residues Asp183, Gly184, Arg186, and Thr188. Residue His191 participates in Zn(2+) binding. Residues Glu197, Gly198, Gly200, and Asp202 each coordinate Ca(2+). His204 serves as a coordination point for Zn(2+). Residues Asp206 and Glu209 each contribute to the Ca(2+) site. His226 contacts Zn(2+). Residue Glu227 is part of the active site. Zn(2+) contacts are provided by His230 and His236. Hemopexin repeat units lie at residues 293–343 (PDLC…FPQL), 344–389 (MSNV…GFPR), 391–439 (VQQI…FSGV), and 440–483 (NGQI…WIGC). Cys296 and Cys483 are joined by a disulfide.

This sequence belongs to the peptidase M10A family. Zn(2+) is required as a cofactor. Ca(2+) serves as cofactor. Post-translationally, autoactivates at least at the 107-Asn-|-Tyr-108 site. In terms of tissue distribution, expressed specifically in the enamel organ.

The protein resides in the secreted. The protein localises to the extracellular space. Its subcellular location is the extracellular matrix. In terms of biological role, degrades amelogenin, the major protein component of the enamel matrix and two of the macromolecules characterizing the cartilage extracellular matrix: aggrecan and the cartilage oligomeric matrix protein (COMP). May play a central role in tooth enamel formation. Cleaves aggrecan at the '360-Asn-|-Phe-361' site. The polypeptide is Matrix metalloproteinase-20 (MMP20) (Homo sapiens (Human)).